Here is a 244-residue protein sequence, read N- to C-terminus: 7-cyano-7-deazaguanine synthase (244 aa).

17–27 (FSGGQDSTTCL) contributes to the ATP binding site. Cysteine 205, cysteine 220, cysteine 223, and cysteine 226 together coordinate Zn(2+).

It belongs to the QueC family. The cofactor is Zn(2+).

The catalysed reaction is 7-carboxy-7-deazaguanine + NH4(+) + ATP = 7-cyano-7-deazaguanine + ADP + phosphate + H2O + H(+). It participates in purine metabolism; 7-cyano-7-deazaguanine biosynthesis. Catalyzes the ATP-dependent conversion of 7-carboxy-7-deazaguanine (CDG) to 7-cyano-7-deazaguanine (preQ(0)). The chain is 7-cyano-7-deazaguanine synthase from Bordetella pertussis (strain Tohama I / ATCC BAA-589 / NCTC 13251).